The sequence spans 88 residues: Small ribosomal subunit protein uS15c (88 aa).

It belongs to the universal ribosomal protein uS15 family. In terms of assembly, part of the 30S ribosomal subunit.

The protein localises to the plastid. Its subcellular location is the chloroplast. This Barbarea verna (Land cress) protein is Small ribosomal subunit protein uS15c (rps15).